We begin with the raw amino-acid sequence, 248 residues long: Adenosylcobinamide-GDP ribazoletransferase (248 aa).

The next 6 helical transmembrane spans lie at 28-48, 103-123, 126-146, 169-189, 193-213, and 225-245; these read LFWF…AGYL, VGSF…IVLV, LAFG…LVQV, AGIQ…LLLM, MLPS…MSLL, and VLGA…VFLA.

This sequence belongs to the CobS family. It depends on Mg(2+) as a cofactor.

Its subcellular location is the cell inner membrane. It carries out the reaction alpha-ribazole + adenosylcob(III)inamide-GDP = adenosylcob(III)alamin + GMP + H(+). The catalysed reaction is alpha-ribazole 5'-phosphate + adenosylcob(III)inamide-GDP = adenosylcob(III)alamin 5'-phosphate + GMP + H(+). It functions in the pathway cofactor biosynthesis; adenosylcobalamin biosynthesis; adenosylcobalamin from cob(II)yrinate a,c-diamide: step 7/7. Its function is as follows. Joins adenosylcobinamide-GDP and alpha-ribazole to generate adenosylcobalamin (Ado-cobalamin). Also synthesizes adenosylcobalamin 5'-phosphate from adenosylcobinamide-GDP and alpha-ribazole 5'-phosphate. The polypeptide is Adenosylcobinamide-GDP ribazoletransferase (Chlorobium phaeobacteroides (strain BS1)).